The sequence spans 329 residues: Fructose-1,6-bisphosphatase class 1 (329 aa).

Glu84, Asp103, Leu105, and Asp106 together coordinate Mg(2+). Substrate-binding positions include 106-109 (DGSS), Asn196, and Lys262. Glu268 serves as a coordination point for Mg(2+).

It belongs to the FBPase class 1 family. In terms of assembly, homotetramer. Mg(2+) serves as cofactor.

Its subcellular location is the cytoplasm. The enzyme catalyses beta-D-fructose 1,6-bisphosphate + H2O = beta-D-fructose 6-phosphate + phosphate. The protein operates within carbohydrate biosynthesis; gluconeogenesis. The chain is Fructose-1,6-bisphosphatase class 1 from Shewanella pealeana (strain ATCC 700345 / ANG-SQ1).